A 971-amino-acid polypeptide reads, in one-letter code: Sodium/calcium exchanger 1 (971 aa).

The signal sequence occupies residues 1–32; that stretch reads MLRLSLPPNVSMGFRLVTLVALLFTHVDHITA. At 33 to 71 the chain is on the extracellular side; sequence DTEAETGGNETTECTGSYYCKKGVILPIWEPQDPSFGDK. N41 carries N-linked (GlcNAc...) asparagine glycosylation. The helical transmembrane segment at 72–92 threads the bilayer; sequence IARATVYFVAMVYMFLGVSII. At 93 to 133 the chain is on the cytoplasmic side; sequence ADRFMSSIEVITSQEKEITIKKPNGETTKTTVRIWNETVSN. Residues 134–154 traverse the membrane as a helical segment; that stretch reads LTLMALGSSAPEILLSVIEVC. One copy of the Alpha-1 repeat lies at 138–178; the sequence is ALGSSAPEILLSVIEVCGHNFTAGDLGPSTIVGSAAFNMFI. Residues 155–167 lie on the Extracellular side of the membrane; that stretch reads GHNFTAGDLGPST. N157 is a glycosylation site (N-linked (GlcNAc...) asparagine). Residues 168 to 188 traverse the membrane as a helical segment; that stretch reads IVGSAAFNMFIIIALCVYVVP. At 189 to 201 the chain is on the cytoplasmic side; that stretch reads DGETRKIKHLRVF. A helical transmembrane segment spans residues 202-222; the sequence is FVTAAWSIFAYTWLYIILSVS. Topologically, residues 223-228 are extracellular; that stretch reads SPGVVE. A helical membrane pass occupies residues 229 to 249; it reads VWEGLLTFFFFPICVVFAWVA. Over 250–798 the chain is Cytoplasmic; it reads DRRLLFYKYV…FVPPTEYWNG (549 aa). The putative calmodulin-binding region stretch occupies residues 251–270; it reads RRLLFYKYVYKRYRAGKQRG. 2 positions are modified to phosphoserine: S282 and S389. Calx-beta domains follow at residues 393-493 and 524-624; these read VNMD…VHLS and ATIT…IEIG. E417, D453, D478, D479, I481, E483, E486, D530, D531, D532, E548, D584, D610, E611, E612, and E716 together coordinate Ca(2+). Residues 799 to 819 traverse the membrane as a helical segment; the sequence is WACFIVSILMIGLLTAFIGDL. Topologically, residues 820–822 are extracellular; sequence ASH. The chain crosses the membrane as a helical span at residues 823–843; sequence FGCTIGLKDSVTAVVFVALGT. Residues 840 to 876 form an Alpha-2 repeat; the sequence is ALGTSVPDTFASKVAATQDQYADASIGNVTGSNAVNV. The Cytoplasmic segment spans residues 844-872; the sequence is SVPDTFASKVAATQDQYADASIGNVTGSN. A helical membrane pass occupies residues 873 to 893; it reads AVNVFLGIGVAWSIAAIYHAA. Over 894–904 the chain is Extracellular; the sequence is NGEQFKVSPGT. The helical transmembrane segment at 905 to 925 threads the bilayer; the sequence is LAFSVTLFTIFAFINVGVLLY. Residues 926–942 lie on the Cytoplasmic side of the membrane; it reads RRRPEIGGELGGPRTAK. Residues 943-963 traverse the membrane as a helical segment; it reads LLTSSLFVLLWLLYIFFSSLE. Topologically, residues 964-971 are extracellular; sequence AYCHIKGF.

This sequence belongs to the Ca(2+):cation antiporter (CaCA) (TC 2.A.19) family. SLC8 subfamily. As to expression, detected in heart, brain cortex and hippocampus (at protein level). Cardiac sarcolemma or brain, and spleen. Expressed in all regions of the kidney, highest levels of expression in the distal convoluted tubule. Expressed throughout the CNS, in decreasing order of abundance in hippocampus, cortex, cerebellum, hypothalamus, midbrain and striatum. Expressed in numerous regions of the brain including multiple cortical layers, hippocampus, septal nuclei, thalamic nuclei, cerebellum, hypothalamus, olfactory bulb and brainstem. Also expressed in various regions of the spinal cord, ventricles and atria of the heart, lung, adrenals and kidney. Isoform 4 seems to be a predominant isoform in aorta, stomach, liver, and kidney.

It is found in the cell membrane. The protein localises to the cell projection. The protein resides in the dendrite. The enzyme catalyses Ca(2+)(in) + 3 Na(+)(out) = Ca(2+)(out) + 3 Na(+)(in). Activated by micromolar levels of Ca(2+). With respect to regulation, only active at low calcium concentrations. Not activated by PKC. Its activity is regulated as follows. Active at all calcium levels tested. Activated by PKC. Only active at low calcium concentrations. Activated by PKC. Its function is as follows. Mediates the exchange of one Ca(2+) ion against three to four Na(+) ions across the cell membrane, and thereby contributes to the regulation of cytoplasmic Ca(2+) levels and Ca(2+)-dependent cellular processes. Contributes to Ca(2+) transport during excitation-contraction coupling in muscle. In a first phase, voltage-gated channels mediate the rapid increase of cytoplasmic Ca(2+) levels due to release of Ca(2+) stores from the endoplasmic reticulum. SLC8A1 mediates the export of Ca(2+) from the cell during the next phase, so that cytoplasmic Ca(2+) levels rapidly return to baseline. Required for normal embryonic heart development and the onset of heart contractions. The chain is Sodium/calcium exchanger 1 (Slc8a1) from Rattus norvegicus (Rat).